The chain runs to 242 residues: Small ribosomal subunit protein uS2 (242 aa).

It belongs to the universal ribosomal protein uS2 family.

This Shewanella amazonensis (strain ATCC BAA-1098 / SB2B) protein is Small ribosomal subunit protein uS2.